The primary structure comprises 229 residues: Cytochrome c oxidase subunit 2 (229 aa).

Residues 1–14 lie on the Mitochondrial intermembrane side of the membrane; the sequence is MAQQAQLGLQDAAS. A helical transmembrane segment spans residues 15–45; it reads PIMEELIHFHDHTLTVVFLISVLIFYLIIVM. Residues 46 to 59 lie on the Mitochondrial matrix side of the membrane; sequence VTTTFMNKHSLDSQ. A helical membrane pass occupies residues 60–87; that stretch reads EVEIVWTVMPAIVLITIALPSLRILYLT. At 88-229 the chain is on the mitochondrial intermembrane side; the sequence is DEISNPHLTI…ENWTTKVLAS (142 aa). His161, Cys196, Glu198, Cys200, His204, and Met207 together coordinate Cu cation. Glu198 contacts Mg(2+).

The protein belongs to the cytochrome c oxidase subunit 2 family. As to quaternary structure, component of the cytochrome c oxidase (complex IV, CIV), a multisubunit enzyme composed of 14 subunits. The complex is composed of a catalytic core of 3 subunits MT-CO1, MT-CO2 and MT-CO3, encoded in the mitochondrial DNA, and 11 supernumerary subunits COX4I, COX5A, COX5B, COX6A, COX6B, COX6C, COX7A, COX7B, COX7C, COX8 and NDUFA4, which are encoded in the nuclear genome. The complex exists as a monomer or a dimer and forms supercomplexes (SCs) in the inner mitochondrial membrane with NADH-ubiquinone oxidoreductase (complex I, CI) and ubiquinol-cytochrome c oxidoreductase (cytochrome b-c1 complex, complex III, CIII), resulting in different assemblies (supercomplex SCI(1)III(2)IV(1) and megacomplex MCI(2)III(2)IV(2)). Found in a complex with TMEM177, COA6, COX18, COX20, SCO1 and SCO2. Interacts with TMEM177 in a COX20-dependent manner. Interacts with COX20. Interacts with COX16. Requires Cu cation as cofactor.

It localises to the mitochondrion inner membrane. The catalysed reaction is 4 Fe(II)-[cytochrome c] + O2 + 8 H(+)(in) = 4 Fe(III)-[cytochrome c] + 2 H2O + 4 H(+)(out). Functionally, component of the cytochrome c oxidase, the last enzyme in the mitochondrial electron transport chain which drives oxidative phosphorylation. The respiratory chain contains 3 multisubunit complexes succinate dehydrogenase (complex II, CII), ubiquinol-cytochrome c oxidoreductase (cytochrome b-c1 complex, complex III, CIII) and cytochrome c oxidase (complex IV, CIV), that cooperate to transfer electrons derived from NADH and succinate to molecular oxygen, creating an electrochemical gradient over the inner membrane that drives transmembrane transport and the ATP synthase. Cytochrome c oxidase is the component of the respiratory chain that catalyzes the reduction of oxygen to water. Electrons originating from reduced cytochrome c in the intermembrane space (IMS) are transferred via the dinuclear copper A center (CU(A)) of subunit 2 and heme A of subunit 1 to the active site in subunit 1, a binuclear center (BNC) formed by heme A3 and copper B (CU(B)). The BNC reduces molecular oxygen to 2 water molecules using 4 electrons from cytochrome c in the IMS and 4 protons from the mitochondrial matrix. The chain is Cytochrome c oxidase subunit 2 (MT-CO2) from Petromyzon marinus (Sea lamprey).